The primary structure comprises 446 residues: Maltoporin (446 aa).

Positions 1-25 (MMITLRKLPLAVAVAAGVMSAQAMA) are cleaved as a signal peptide.

This sequence belongs to the porin LamB (TC 1.B.3) family. Homotrimer formed of three 18-stranded antiparallel beta-barrels, containing three independent channels.

Its subcellular location is the cell outer membrane. It catalyses the reaction beta-maltose(in) = beta-maltose(out). Functionally, involved in the transport of maltose and maltodextrins. This chain is Maltoporin, found in Escherichia coli (strain K12 / MC4100 / BW2952).